We begin with the raw amino-acid sequence, 690 residues long: MPRQHAIEDYRNFGIMAHIDAGKTTTTERILYYTGKSHKIGEVHEGAATMDWMTQEQERGITITSAATTAFWDGKRLNIIDTPGHVDFTIEVERSLRVLDGAVCVLDSNQGVEPQTETVWRQGDKYKVPRIVFCNKMDKTGADFYKCLADIVDRLGARPVALQLPIGSESNFKGMVDLVRMKALVWNNEALGAMYDIVDIPADLADKAKEYREKLVEAAVELDDDAMAAYLDGAEPDEATLKKLIRKAVLTGAFYPVLCGTAFKNKGVQPLLDAVVAYLPSPLDVPAIKGVDDKGNEVVRHADDKEPMSLLAFKIMDDPFVGTITFCRIYSGILQSGTGVVNSTREKKERIGRMLLMHANNREDIKEAYAGDIVALAGLKEARTGDTLCDPAHQVILEKMEFPDPVIEIAIEPKSKADQEKLGIALAKLAAEDPSFRVSTDQESGQTILKGMGELHLDIKVDILKRTYKVDANIGAPQVAFRERVTKRVEHSYTHKKQTGGTGQFAAVTLIVEPSEPGKGYEFESKIVGGAVPKEYIPGVEKGIESVLSSGVVAGFPVVDVKVQLIDGKFHDVDSSALAFEIATRACFREALQKGKSVLLEPIMKVEVVTPEDYTGSVIGDLNSRRGQIQGQDMRGNANVINAMVPLMNMFGYVNNLRSMSQGRATFTMQFDHYAEAPANVSAEVQKKFA.

A tr-type G domain is found at 8–283 (EDYRNFGIMA…AVVAYLPSPL (276 aa)). GTP contacts are provided by residues 17–24 (AHIDAGKT), 81–85 (DTPGH), and 135–138 (NKMD).

The protein belongs to the TRAFAC class translation factor GTPase superfamily. Classic translation factor GTPase family. EF-G/EF-2 subfamily.

The protein localises to the cytoplasm. Catalyzes the GTP-dependent ribosomal translocation step during translation elongation. During this step, the ribosome changes from the pre-translocational (PRE) to the post-translocational (POST) state as the newly formed A-site-bound peptidyl-tRNA and P-site-bound deacylated tRNA move to the P and E sites, respectively. Catalyzes the coordinated movement of the two tRNA molecules, the mRNA and conformational changes in the ribosome. This is Elongation factor G from Nitrobacter winogradskyi (strain ATCC 25391 / DSM 10237 / CIP 104748 / NCIMB 11846 / Nb-255).